The chain runs to 178 residues: Crossover junction endodeoxyribonuclease RuvC (178 aa).

Residues D14, E73, and D145 contribute to the active site. Residues D14, E73, and D145 each contribute to the Mg(2+) site.

The protein belongs to the RuvC family. As to quaternary structure, homodimer which binds Holliday junction (HJ) DNA. The HJ becomes 2-fold symmetrical on binding to RuvC with unstacked arms; it has a different conformation from HJ DNA in complex with RuvA. In the full resolvosome a probable DNA-RuvA(4)-RuvB(12)-RuvC(2) complex forms which resolves the HJ. Mg(2+) serves as cofactor.

The protein localises to the cytoplasm. It carries out the reaction Endonucleolytic cleavage at a junction such as a reciprocal single-stranded crossover between two homologous DNA duplexes (Holliday junction).. In terms of biological role, the RuvA-RuvB-RuvC complex processes Holliday junction (HJ) DNA during genetic recombination and DNA repair. Endonuclease that resolves HJ intermediates. Cleaves cruciform DNA by making single-stranded nicks across the HJ at symmetrical positions within the homologous arms, yielding a 5'-phosphate and a 3'-hydroxyl group; requires a central core of homology in the junction. The consensus cleavage sequence is 5'-(A/T)TT(C/G)-3'. Cleavage occurs on the 3'-side of the TT dinucleotide at the point of strand exchange. HJ branch migration catalyzed by RuvA-RuvB allows RuvC to scan DNA until it finds its consensus sequence, where it cleaves and resolves the cruciform DNA. The polypeptide is Crossover junction endodeoxyribonuclease RuvC (Nitrosomonas eutropha (strain DSM 101675 / C91 / Nm57)).